The primary structure comprises 514 residues: Peptide chain release factor 3 (514 aa).

In terms of domain architecture, tr-type G spans 8–268 (KKRRTFAIIS…TFLKFAPEPH (261 aa)). Residues 17–24 (SHPDAGKT), 85–89 (DTPGH), and 139–142 (NKLD) contribute to the GTP site.

The protein belongs to the TRAFAC class translation factor GTPase superfamily. Classic translation factor GTPase family. PrfC subfamily.

It localises to the cytoplasm. Its function is as follows. Increases the formation of ribosomal termination complexes and stimulates activities of RF-1 and RF-2. It binds guanine nucleotides and has strong preference for UGA stop codons. It may interact directly with the ribosome. The stimulation of RF-1 and RF-2 is significantly reduced by GTP and GDP, but not by GMP. This is Peptide chain release factor 3 from Streptococcus gordonii (strain Challis / ATCC 35105 / BCRC 15272 / CH1 / DL1 / V288).